The primary structure comprises 581 residues: Proline--tRNA ligase (581 aa).

This sequence belongs to the class-II aminoacyl-tRNA synthetase family. ProS type 1 subfamily. As to quaternary structure, homodimer.

Its subcellular location is the cytoplasm. The catalysed reaction is tRNA(Pro) + L-proline + ATP = L-prolyl-tRNA(Pro) + AMP + diphosphate. Catalyzes the attachment of proline to tRNA(Pro) in a two-step reaction: proline is first activated by ATP to form Pro-AMP and then transferred to the acceptor end of tRNA(Pro). As ProRS can inadvertently accommodate and process non-cognate amino acids such as alanine and cysteine, to avoid such errors it has two additional distinct editing activities against alanine. One activity is designated as 'pretransfer' editing and involves the tRNA(Pro)-independent hydrolysis of activated Ala-AMP. The other activity is designated 'posttransfer' editing and involves deacylation of mischarged Ala-tRNA(Pro). The misacylated Cys-tRNA(Pro) is not edited by ProRS. The sequence is that of Proline--tRNA ligase from Paracidovorax citrulli (strain AAC00-1) (Acidovorax citrulli).